The sequence spans 346 residues: Ferredoxin--NADP reductase 1 (346 aa).

FAD is bound by residues glutamate 37, lysine 45, tyrosine 49, isoleucine 89, proline 124, aspartate 287, and serine 328.

The protein belongs to the ferredoxin--NADP reductase type 2 family. Homodimer. FAD serves as cofactor.

The catalysed reaction is 2 reduced [2Fe-2S]-[ferredoxin] + NADP(+) + H(+) = 2 oxidized [2Fe-2S]-[ferredoxin] + NADPH. The chain is Ferredoxin--NADP reductase 1 from Bacillus pumilus (strain SAFR-032).